A 326-amino-acid chain; its full sequence is Nuclear egress protein 1 (326 aa).

The CCCH-type zinc-finger motif lies at 115-244 (CLSLSGMGYY…YAVFPTKSVH (130 aa)).

It belongs to the herpesviridae NEC1 protein family. Forms a heterohexameric complex with NEC2. Interacts with capsid vertex specific component 2/CVC2; this interaction directs the capsid to the host inner nuclear membrane to initiate budding. In terms of processing, phosphorylated at serine residues in the N-terminus. This phosphorylation regulates the localization within the inner nuclear membrane.

The protein localises to the host nucleus inner membrane. Functionally, plays an essential role in virion nuclear egress, the first step of virion release from infected cell. Within the host nucleus, NEC1 interacts with the newly formed capsid through the vertexes and directs it to the inner nuclear membrane by associating with NEC2. Induces the budding of the capsid at the inner nuclear membrane as well as its envelopment into the perinuclear space. There, the NEC1/NEC2 complex promotes the fusion of the enveloped capsid with the outer nuclear membrane and the subsequent release of the viral capsid into the cytoplasm where it will reach the secondary budding sites in the host Golgi or trans-Golgi network. The polypeptide is Nuclear egress protein 1 (Equine herpesvirus 1 (strain Ab4p) (EHV-1)).